The chain runs to 192 residues: GTP cyclohydrolase-2 (192 aa).

50 to 54 is a binding site for GTP; sequence RLHSE. Residues cysteine 55, cysteine 66, and cysteine 68 each contribute to the Zn(2+) site. GTP is bound by residues 92 to 94 and threonine 114; that span reads EGR. Aspartate 126 (proton acceptor) is an active-site residue. The Nucleophile role is filled by arginine 128. Residues threonine 149 and lysine 154 each coordinate GTP.

The protein belongs to the GTP cyclohydrolase II family. Zn(2+) is required as a cofactor.

It catalyses the reaction GTP + 4 H2O = 2,5-diamino-6-hydroxy-4-(5-phosphoribosylamino)-pyrimidine + formate + 2 phosphate + 3 H(+). It participates in cofactor biosynthesis; riboflavin biosynthesis; 5-amino-6-(D-ribitylamino)uracil from GTP: step 1/4. Functionally, catalyzes the conversion of GTP to 2,5-diamino-6-ribosylamino-4(3H)-pyrimidinone 5'-phosphate (DARP), formate and pyrophosphate. In Helicobacter pylori (strain Shi470), this protein is GTP cyclohydrolase-2.